The primary structure comprises 206 residues: Thymidylate kinase (206 aa).

ATP is bound at residue 10–17; that stretch reads GVDGVGKT.

This sequence belongs to the thymidylate kinase family.

The catalysed reaction is dTMP + ATP = dTDP + ADP. Functionally, phosphorylation of dTMP to form dTDP in both de novo and salvage pathways of dTTP synthesis. The polypeptide is Thymidylate kinase (Bifidobacterium longum (strain DJO10A)).